The sequence spans 359 residues: Peptide chain release factor 1 (359 aa).

N5-methylglutamine is present on Q235. The tract at residues 283–309 is disordered; sequence QKAESERSQARRSQVGSGDRSERIRTY.

The protein belongs to the prokaryotic/mitochondrial release factor family. Post-translationally, methylated by PrmC. Methylation increases the termination efficiency of RF1.

Its subcellular location is the cytoplasm. Its function is as follows. Peptide chain release factor 1 directs the termination of translation in response to the peptide chain termination codons UAG and UAA. This Brucella melitensis biotype 2 (strain ATCC 23457) protein is Peptide chain release factor 1.